A 1379-amino-acid polypeptide reads, in one-letter code: DNA-directed RNA polymerase subunit beta (1379 aa).

It belongs to the RNA polymerase beta chain family. As to quaternary structure, the RNAP catalytic core consists of 2 alpha, 1 beta, 1 beta' and 1 omega subunit. When a sigma factor is associated with the core the holoenzyme is formed, which can initiate transcription.

The catalysed reaction is RNA(n) + a ribonucleoside 5'-triphosphate = RNA(n+1) + diphosphate. In terms of biological role, DNA-dependent RNA polymerase catalyzes the transcription of DNA into RNA using the four ribonucleoside triphosphates as substrates. The protein is DNA-directed RNA polymerase subunit beta of Rhizobium etli (strain ATCC 51251 / DSM 11541 / JCM 21823 / NBRC 15573 / CFN 42).